Consider the following 255-residue polypeptide: Geranylgeranylglyceryl phosphate synthase (255 aa).

Mg(2+) contacts are provided by Asp31 and Ser60. Sn-glycerol 1-phosphate is bound by residues 179-185, 211-212, and 233-234; these read YLEAGSG, GG, and GT.

Belongs to the GGGP/HepGP synthase family. Group II subfamily. Mg(2+) is required as a cofactor.

The protein localises to the cytoplasm. It catalyses the reaction sn-glycerol 1-phosphate + (2E,6E,10E)-geranylgeranyl diphosphate = sn-3-O-(geranylgeranyl)glycerol 1-phosphate + diphosphate. It functions in the pathway membrane lipid metabolism; glycerophospholipid metabolism. In terms of biological role, prenyltransferase that catalyzes the transfer of the geranylgeranyl moiety of geranylgeranyl diphosphate (GGPP) to the C3 hydroxyl of sn-glycerol-1-phosphate (G1P). This reaction is the first ether-bond-formation step in the biosynthesis of archaeal membrane lipids. This Methanothrix thermoacetophila (strain DSM 6194 / JCM 14653 / NBRC 101360 / PT) (Methanosaeta thermophila) protein is Geranylgeranylglyceryl phosphate synthase.